Consider the following 249-residue polypeptide: Methyltransferase 1 (249 aa).

This sequence belongs to the FkbM methyltransferase family.

Its pathway is secondary metabolite biosynthesis. Methyltransferase; part of the pathway that mediates the biosynthesis of tenellin-type 2-pyridones, iron-chelating compounds involved in iron stress tolerance, competition with the natural competitor fungus Metarhizium robertsii and insect hosts infection. Methylates pyridovericin-N-O-(beta-D-glucopyranoside) produced by the UDP-glucosyltransferase GT1 to yield pyridovericin-N-O-(4-O-methyl-beta-D-glucopyranoside) (PMGP). The pathway begins with the assembly of the polyketide-amino acid backbone by the hybrid PKS-NRPS tenS with the help of the enoyl reductase tenC. These enzymes catalyze the synthesis of the pyrrolidine-2-dione intermediates pretellinin A, 11-hydropretellenin A, 12-hydropretellenin A, 13-hydropretellenin A, 14-hydropretellenin A, 12-oxopretellenin A and prototellinin D. The cytochrome P450 monooxygenase tenA then catalyzes an oxidative ring expansion of pretenellin A and 14-hydropretellenin A to form the 2-pyridone core, leading to pretenellin B and pyridovericin, respectively. The cytochrome P450 monooxygenase tenB is then required for the selective N-hydroxylation of the 2-pyridone nitrogen of yield tellinin and 15-hydroxytellenin (15-HT), respectively. The UDP-glucosyltransferase GT1 and the methyltransferase MT1, located outside the tenS gene cluster, contribute to the stepwise glycosylation and methylation of 15-HT to obtain the glycoside pyridovericin-N-O-(4-O-methyl-beta-D-glucopyranoside) (PMGP). Additional related compounds such as 1-O-methyl-15-HT, (8Z)-1-O-methyl-15-HT, and O-methyltenellin A are also produced but the enzymes involved in their biosynthesis have still to be determined. In Beauveria bassiana (strain ARSEF 2860) (White muscardine disease fungus), this protein is Methyltransferase 1.